The following is a 667-amino-acid chain: Acetolactate synthase 1, chloroplastic (667 aa).

The segment covering methionine 1–phenylalanine 35 has biased composition (low complexity). Positions methionine 1–proline 45 are disordered. Residues methionine 1–arginine 94 constitute a chloroplast transit peptide. Position 141 (glutamate 141) interacts with thiamine diphosphate. A disulfide bridge connects residues cysteine 161 and cysteine 307. Residues arginine 243, histidine 349–arginine 370, and aspartate 392–aspartate 411 contribute to the FAD site. Residues glutamine 484–histidine 564 are thiamine pyrophosphate binding. The Mg(2+) site is built by aspartate 535 and asparagine 562.

This sequence belongs to the TPP enzyme family. It depends on Mg(2+) as a cofactor. Requires thiamine diphosphate as cofactor.

It is found in the plastid. Its subcellular location is the chloroplast. It carries out the reaction 2 pyruvate + H(+) = (2S)-2-acetolactate + CO2. It functions in the pathway amino-acid biosynthesis; L-isoleucine biosynthesis; L-isoleucine from 2-oxobutanoate: step 1/4. It participates in amino-acid biosynthesis; L-valine biosynthesis; L-valine from pyruvate: step 1/4. This Nicotiana tabacum (Common tobacco) protein is Acetolactate synthase 1, chloroplastic (ALS SURA).